The sequence spans 404 residues: Glucosyl-3-phosphoglycerate synthase (404 aa).

Residue D146 coordinates a divalent metal cation. 188–190 (GRV) serves as a coordination point for (2R)-3-phosphoglycerate. Residue H270 participates in a divalent metal cation binding.

It belongs to the glycosyltransferase 2 family. Mn(2+) is required as a cofactor. Requires Co(2+) as cofactor. The cofactor is Mg(2+).

The catalysed reaction is an NDP-alpha-D-glucose + (2R)-3-phosphoglycerate = (2R)-2-O-(alpha-D-glucopyranosyl)-3-phospho-glycerate + a ribonucleoside 5'-diphosphate + H(+). Involved in the biosynthesis of 6-O-methylglucose lipopolysaccarides (MGLPs). Catalyzes the transfer of a glucose (Glc) moiety from uridine diphosphate (UDP-Glc) to the position 2 of 3-phospho-D-glycerate (3-PGA) to form glucosyl-3-phosphoglycerate (GPG). The protein is Glucosyl-3-phosphoglycerate synthase of Methanococcoides burtonii (strain DSM 6242 / NBRC 107633 / OCM 468 / ACE-M).